The sequence spans 301 residues: tRNA-cytidine(32) 2-sulfurtransferase (301 aa).

The PP-loop motif motif lies at S47–S52. The [4Fe-4S] cluster site is built by C122, C125, and C213.

It belongs to the TtcA family. In terms of assembly, homodimer. It depends on Mg(2+) as a cofactor. [4Fe-4S] cluster is required as a cofactor.

It localises to the cytoplasm. The catalysed reaction is cytidine(32) in tRNA + S-sulfanyl-L-cysteinyl-[cysteine desulfurase] + AH2 + ATP = 2-thiocytidine(32) in tRNA + L-cysteinyl-[cysteine desulfurase] + A + AMP + diphosphate + H(+). It participates in tRNA modification. Functionally, catalyzes the ATP-dependent 2-thiolation of cytidine in position 32 of tRNA, to form 2-thiocytidine (s(2)C32). The sulfur atoms are provided by the cysteine/cysteine desulfurase (IscS) system. This is tRNA-cytidine(32) 2-sulfurtransferase from Photobacterium profundum (strain SS9).